The following is a 154-amino-acid chain: Protein AE7-like 1 (154 aa).

Belongs to the MIP18 family.

May play a role in chromosome segregation through establishment of sister chromatid cohesion. Unable to complement ae7 mutants, and thus probably not involved in the cytosolic iron-sulfur assembly (CIA) pathway. This chain is Protein AE7-like 1, found in Arabidopsis thaliana (Mouse-ear cress).